The primary structure comprises 67 residues: Large ribosomal subunit protein bL35 (67 aa).

The disordered stretch occupies residues 1–20 (MPKLKTKSGAKKRFVPKKSG).

This sequence belongs to the bacterial ribosomal protein bL35 family.

In Anaeromyxobacter dehalogenans (strain 2CP-C), this protein is Large ribosomal subunit protein bL35.